The chain runs to 957 residues: Glycine dehydrogenase (decarboxylating) (957 aa).

N6-(pyridoxal phosphate)lysine is present on K708.

Belongs to the GcvP family. The glycine cleavage system is composed of four proteins: P, T, L and H. Pyridoxal 5'-phosphate is required as a cofactor.

It carries out the reaction N(6)-[(R)-lipoyl]-L-lysyl-[glycine-cleavage complex H protein] + glycine + H(+) = N(6)-[(R)-S(8)-aminomethyldihydrolipoyl]-L-lysyl-[glycine-cleavage complex H protein] + CO2. The glycine cleavage system catalyzes the degradation of glycine. The P protein binds the alpha-amino group of glycine through its pyridoxal phosphate cofactor; CO(2) is released and the remaining methylamine moiety is then transferred to the lipoamide cofactor of the H protein. The sequence is that of Glycine dehydrogenase (decarboxylating) from Escherichia coli (strain K12 / MC4100 / BW2952).